The following is a 329-amino-acid chain: GMP reductase (329 aa).

Cys-178 acts as the Thioimidate intermediate in catalysis. An NADP(+)-binding site is contributed by 207 to 230 (IIADGGIRNNGDIAKSIRFGATMC).

The protein belongs to the IMPDH/GMPR family. GuaC type 2 subfamily.

It carries out the reaction IMP + NH4(+) + NADP(+) = GMP + NADPH + 2 H(+). Functionally, catalyzes the irreversible NADPH-dependent deamination of GMP to IMP. It functions in the conversion of nucleobase, nucleoside and nucleotide derivatives of G to A nucleotides, and in maintaining the intracellular balance of A and G nucleotides. This Lacticaseibacillus paracasei (strain ATCC 334 / BCRC 17002 / CCUG 31169 / CIP 107868 / KCTC 3260 / NRRL B-441) (Lactobacillus paracasei) protein is GMP reductase.